The primary structure comprises 381 residues: Pectin lyase 1 (381 aa).

The N-terminal stretch at 1 to 20 (MKYASFIAAAAAALASAVSA) is a signal peptide. Cystine bridges form between cysteine 83/cysteine 102 and cysteine 92/cysteine 227. N-linked (GlcNAc...) asparagine glycosylation is present at asparagine 130. Arginine 257 is a catalytic residue. Cysteine 324 and cysteine 332 are oxidised to a cystine.

The protein belongs to the polysaccharide lyase 1 family.

Its subcellular location is the secreted. The enzyme catalyses Eliminative cleavage of (1-&gt;4)-alpha-D-galacturonan methyl ester to give oligosaccharides with 4-deoxy-6-O-methyl-alpha-D-galact-4-enuronosyl groups at their non-reducing ends.. Functionally, pectinolytic enzymes consist of four classes of enzymes: pectin lyase, polygalacturonase, pectin methylesterase and rhamnogalacturonase. Among pectinolytic enzymes, pectin lyase is the most important in depolymerization of pectin, since it cleaves internal glycosidic bonds of highly methylated pectins. The protein is Pectin lyase 1 (pel1) of Aspergillus oryzae (strain ATCC 42149 / RIB 40) (Yellow koji mold).